Here is an 820-residue protein sequence, read N- to C-terminus: Phospholipase D alpha 3 (820 aa).

The region spanning 1–133 (MTEQLLLHGT…ITGQPIDRWL (133 aa)) is the C2 domain. Position 194 (aspartate 194) interacts with Ca(2+). In terms of domain architecture, PLD phosphodiesterase 1 spans 334–371 (TMFTHHQKTIVVDSEVDGSLTKRRIVSFLGGIDLCDGR). Residues histidine 339, lysine 341, and aspartate 346 contribute to the active site. Histidine 339 contacts a 1,2-diacyl-sn-glycero-3-phosphate. Residues histidine 377 and histidine 411 each coordinate Ca(2+). A 1,2-diacyl-sn-glycero-3-phosphate-binding residues include glutamine 528 and histidine 667. One can recognise a PLD phosphodiesterase 2 domain in the interval 662–689 (FMIYVHSKMMIVDDEYIIIGSANINQRS). Active-site residues include histidine 667, lysine 669, and aspartate 674. Residue glutamate 730 participates in Ca(2+) binding.

It belongs to the phospholipase D family. C2-PLD subfamily. The cofactor is Ca(2+). In terms of tissue distribution, expressed in buds, flowers, siliques, stems, old leaves and roots. Expressed in the sieve elements.

It localises to the cytoplasm. The protein resides in the membrane. It catalyses the reaction a 1,2-diacyl-sn-glycero-3-phosphocholine + H2O = a 1,2-diacyl-sn-glycero-3-phosphate + choline + H(+). In terms of biological role, hydrolyzes glycerol-phospholipids at the terminal phosphodiesteric bond to generate phosphatidic acids (PA). Active with phosphatidylcholine (PC), phosphatidylethanolamine (PE), phosphatidylglycerol (PG), and phosphatidylserine (PS) as substrates. No activity toward phosphatidylinositol (PI) or PIP2. Positively mediates plant responses to hyperosmotic stresses and promotes root growth, flowering, and stress avoidance. Not involved in the abscisic acid regulation of stomatal movement and transpirational water loss. The sequence is that of Phospholipase D alpha 3 from Arabidopsis thaliana (Mouse-ear cress).